Reading from the N-terminus, the 654-residue chain is Tetracycline resistance protein TetQ (654 aa).

Positions 1-244 constitute a tr-type G domain; sequence MNIINLGILA…AISSFILPPE (244 aa). Residues 10-17, 74-78, and 128-131 contribute to the GTP site; these read AHIDAGKT, DTPGH, and NKID.

The protein belongs to the TRAFAC class translation factor GTPase superfamily. Classic translation factor GTPase family. TetM/TetO subfamily.

In terms of biological role, abolishes the inhibitory effect of tetracyclin on protein synthesis by a non-covalent modification of the ribosomes. This Prevotella intermedia protein is Tetracycline resistance protein TetQ (tetQ).